The chain runs to 131 residues: L-ectoine synthase (131 aa).

It belongs to the ectoine synthase family.

The enzyme catalyses (2S)-4-acetamido-2-aminobutanoate = L-ectoine + H2O. It participates in amine and polyamine biosynthesis; ectoine biosynthesis; L-ectoine from L-aspartate 4-semialdehyde: step 3/3. In terms of biological role, catalyzes the circularization of gamma-N-acetyl-alpha,gamma-diaminobutyric acid (ADABA) to ectoine (1,4,5,6-tetrahydro-2-methyl-4-pyrimidine carboxylic acid), which is an excellent osmoprotectant. In Bordetella bronchiseptica (strain ATCC BAA-588 / NCTC 13252 / RB50) (Alcaligenes bronchisepticus), this protein is L-ectoine synthase.